We begin with the raw amino-acid sequence, 446 residues long: Maltoporin (446 aa).

The first 25 residues, 1-25, serve as a signal peptide directing secretion; it reads MMITLRKLPLAVAVAAGVMSAQAMA.

The protein belongs to the porin LamB (TC 1.B.3) family. As to quaternary structure, homotrimer formed of three 18-stranded antiparallel beta-barrels, containing three independent channels.

It is found in the cell outer membrane. The enzyme catalyses beta-maltose(in) = beta-maltose(out). Its function is as follows. Involved in the transport of maltose and maltodextrins. The protein is Maltoporin of Escherichia coli O127:H6 (strain E2348/69 / EPEC).